The primary structure comprises 619 residues: Chaperone protein HscA homolog (619 aa).

The protein belongs to the heat shock protein 70 family.

Chaperone involved in the maturation of iron-sulfur cluster-containing proteins. Has a low intrinsic ATPase activity which is markedly stimulated by HscB. The protein is Chaperone protein HscA homolog of Acinetobacter baumannii (strain ATCC 17978 / DSM 105126 / CIP 53.77 / LMG 1025 / NCDC KC755 / 5377).